A 72-amino-acid polypeptide reads, in one-letter code: uncharacterized protein (72 aa).

This is an uncharacterized protein from Vaccinia virus (strain Copenhagen) (VACV).